Consider the following 284-residue polypeptide: Spermidine/putrescine transport system permease protein PotC homolog (284 aa).

6 consecutive transmembrane segments (helical) span residues 13-33 (YFFLLITLIYLPLLIVVLVSL), 76-96 (IIIGVITVLVSVPIAVISAFA), 116-136 (LATPDIITAISLVLLFANTWL), 143-163 (GFFTIITSHISFSVPYALILI), 189-209 (FFHITLPYLMPSIFSAVLVVF), and 242-262 (AWAIAFGSILILISVLGVCLI). An ABC transmembrane type-1 domain is found at 72–263 (LINSIIIGVI…ISVLGVCLIT (192 aa)).

The protein belongs to the binding-protein-dependent transport system permease family. CysTW subfamily.

The protein localises to the cell membrane. In terms of biological role, required for the activity of the bacterial transport system of putrescine and spermidine. The protein is Spermidine/putrescine transport system permease protein PotC homolog (potC) of Mycoplasma genitalium (strain ATCC 33530 / DSM 19775 / NCTC 10195 / G37) (Mycoplasmoides genitalium).